We begin with the raw amino-acid sequence, 651 residues long: MQRPLLEQPERLEQRLKDIPTEPGCYLMRDADDRLLYVGKSKTLRSRVRSYFRSSHDLSPRIRLMVRQICEIEFIVTDSEAEALALESNLIKNQQPHFNVLLKDDKKYPYLCITWSEDYPRIFITRRRRFRSPLDRFYGPYVDVGLLRRTLFLVKRVFPLRQRPRPLYPNRTCLNYSIGRCPGVCQEKVSSEDYHQILRKVAMVFQGRSDELRQLLNQQMERYAERLDFESAARIRDQLQGIDQLTADQKMSLPDASVSRDVLAVAQDDHFAAIQLFQMRAGKLVGRLGFAADATDLQAGLILQRVIEEHYSQVDAVEIPPEVLVQHELPQQRLIAEWLSEQRERKVQVLHPQRRQKADLIDLVMRNAEFELGRARQSQEQQALANEDLAQLLELATPPRRIEGYDISHIQGSDAVASQVVFIDGLPAKQHYRRYKIQSSSIQAGHSDDFMAMAEIMRRRFRKWARVKAEGADLDQVRRQSSSSLNMDGLHDWPDVVMIDGGKGQLSAVMEALRELDLHEDLVVCSLAKQREEIFLPEAKQPLESEPDQLGVSLLRRLRDEAHRFAVTFHRQQRGQRMKRSRLSDIPGLGPKRVRDLLAHFQSIDAIQLASVDQLHQAPGVGLSLAKQIRAYFHPQEMDEDNMAMAGEDMA.

The GIY-YIG domain occupies 21–100 (TEPGCYLMRD…IKNQQPHFNV (80 aa)). The 36-residue stretch at 210-245 (DELRQLLNQQMERYAERLDFESAARIRDQLQGIDQL) folds into the UVR domain.

Belongs to the UvrC family. As to quaternary structure, interacts with UvrB in an incision complex.

Its subcellular location is the cytoplasm. Its function is as follows. The UvrABC repair system catalyzes the recognition and processing of DNA lesions. UvrC both incises the 5' and 3' sides of the lesion. The N-terminal half is responsible for the 3' incision and the C-terminal half is responsible for the 5' incision. The protein is UvrABC system protein C of Synechococcus sp. (strain CC9311).